The chain runs to 175 residues: Adenine phosphoribosyltransferase (175 aa).

This sequence belongs to the purine/pyrimidine phosphoribosyltransferase family. As to quaternary structure, homodimer.

The protein resides in the cytoplasm. The catalysed reaction is AMP + diphosphate = 5-phospho-alpha-D-ribose 1-diphosphate + adenine. Its pathway is purine metabolism; AMP biosynthesis via salvage pathway; AMP from adenine: step 1/1. Catalyzes a salvage reaction resulting in the formation of AMP, that is energically less costly than de novo synthesis. The chain is Adenine phosphoribosyltransferase from Lactobacillus delbrueckii subsp. bulgaricus (strain ATCC 11842 / DSM 20081 / BCRC 10696 / JCM 1002 / NBRC 13953 / NCIMB 11778 / NCTC 12712 / WDCM 00102 / Lb 14).